We begin with the raw amino-acid sequence, 401 residues long: Imidazolonepropionase (401 aa).

2 residues coordinate Fe(3+): histidine 70 and histidine 72. Positions 70 and 72 each coordinate Zn(2+). 4-imidazolone-5-propanoate contacts are provided by arginine 79, tyrosine 142, and histidine 175. Residue tyrosine 142 coordinates N-formimidoyl-L-glutamate. Histidine 238 lines the Fe(3+) pocket. Residue histidine 238 coordinates Zn(2+). Residue glutamine 241 coordinates 4-imidazolone-5-propanoate. A Fe(3+)-binding site is contributed by aspartate 313. Aspartate 313 is a binding site for Zn(2+). 2 residues coordinate N-formimidoyl-L-glutamate: asparagine 315 and glycine 317. Position 318 (threonine 318) interacts with 4-imidazolone-5-propanoate.

This sequence belongs to the metallo-dependent hydrolases superfamily. HutI family. It depends on Zn(2+) as a cofactor. Requires Fe(3+) as cofactor.

It localises to the cytoplasm. The enzyme catalyses 4-imidazolone-5-propanoate + H2O = N-formimidoyl-L-glutamate. Its pathway is amino-acid degradation; L-histidine degradation into L-glutamate; N-formimidoyl-L-glutamate from L-histidine: step 3/3. Its function is as follows. Catalyzes the hydrolytic cleavage of the carbon-nitrogen bond in imidazolone-5-propanoate to yield N-formimidoyl-L-glutamate. It is the third step in the universal histidine degradation pathway. This is Imidazolonepropionase from Acidiphilium cryptum (strain JF-5).